Consider the following 171-residue polypeptide: Superoxide dismutase [Cu-Zn] 2 (171 aa).

The N-terminal stretch at 1–20 (MKKLSGVLAGSLLLISASFS) is a signal peptide. The Cu cation site is built by histidine 67, histidine 69, and histidine 85. Cysteines 74 and 167 form a disulfide. Residues histidine 85, histidine 93, histidine 102, and aspartate 105 each contribute to the Zn(2+) site. Histidine 147 contributes to the Cu cation binding site.

Belongs to the Cu-Zn superoxide dismutase family. Requires Cu cation as cofactor. The cofactor is Zn(2+).

It carries out the reaction 2 superoxide + 2 H(+) = H2O2 + O2. Functionally, destroys radicals which are normally produced within the cells and which are toxic to biological systems. This Aquifex aeolicus (strain VF5) protein is Superoxide dismutase [Cu-Zn] 2 (sodC2).